Consider the following 426-residue polypeptide: MGNNIKVTFNPDKIAAWWPAVGTYYTTTYPQNQSVFQPGIYQTTSLVNPKTQQELDSVLINRYKQIDWNTWQGFPVDQKLPLVNRDPPPKSAQTFEIKPGPIIVPGIRDIPRGLVPPQTPTNRDQGRKPTPPTPPLRDTHPHLTMKNQTFHLQGFVDGLRDLTTTERQHNAYGDPFTTLSPVVPTVSTILSPPSTTGDPAQSPEMSPSSLLGLLAGLQVVYFLWTKILTIAQNLDWWWTSLSFPGGIPECTGQNSQFQTCKHLPTSCPPTCNGFRWMYLRRFIIYLLVLLLCLIFLLVLLDWKGLIPVCPIQPTTETTVNCRQCTISVQDMYTPPYCCCLKPTAGNCTCWPIPSSWALGNYLWEWALARFSWLNLLVPLLQWLGGISLIAWFLLIWMIWFWGPALLSILPPFIPIFVLFFLIWVYI.

The N-myristoyl glycine; by host moiety is linked to residue Gly2. The interval 2 to 143 (GNNIKVTFNP…PPLRDTHPHL (142 aa)) is pre-S1. The tract at residues 2-202 (GNNIKVTFNP…PSTTGDPAQS (201 aa)) is pre-S. Residues 2 to 209 (GNNIKVTFNP…AQSPEMSPSS (208 aa)) lie on the Virion surface; in external conformation side of the membrane. Residues 2–281 (GNNIKVTFNP…NGFRWMYLRR (280 aa)) are Intravirion; in internal conformation-facing. The N-linked (GlcNAc...) asparagine glycan is linked to Asn3. The tract at residues 107–142 (IRDIPRGLVPPQTPTNRDQGRKPTPPTPPLRDTHPH) is disordered. Residues 144–202 (TMKNQTFHLQGFVDGLRDLTTTERQHNAYGDPFTTLSPVVPTVSTILSPPSTTGDPAQS) form a pre-S2 region. Residues 210–230 (LLGLLAGLQVVYFLWTKILTI) traverse the membrane as a helical segment. Over 231 to 281 (AQNLDWWWTSLSFPGGIPECTGQNSQFQTCKHLPTSCPPTCNGFRWMYLRR) the chain is Intravirion; in external conformation. The chain crosses the membrane as a helical span at residues 282-302 (FIIYLLVLLLCLIFLLVLLDW). Topologically, residues 303–374 (KGLIPVCPIQ…WALARFSWLN (72 aa)) are virion surface. An N-linked (GlcNAc...) asparagine; by host glycan is attached at Asn346. A helical transmembrane segment spans residues 375–395 (LLVPLLQWLGGISLIAWFLLI). Residues 396–401 (WMIWFW) lie on the Intravirion side of the membrane. A helical transmembrane segment spans residues 402–424 (GPALLSILPPFIPIFVLFFLIWV). Topologically, residues 425–426 (YI) are virion surface.

Belongs to the orthohepadnavirus major surface antigen family. As to quaternary structure, in its internal form (Li-HBsAg), interacts with the capsid protein and with the isoform S. Interacts with host chaperone CANX. In terms of assembly, associates with host chaperone CANX through its pre-S2 N glycan; this association may be essential for isoform M proper secretion. Interacts with isoform L. Interacts with the antigens of satellite virus HDV (HDVAgs); this interaction is required for encapsidation of HDV genomic RNA. In terms of processing, isoform M is N-terminally acetylated by host at a ratio of 90%, and N-glycosylated by host at the pre-S2 region. Post-translationally, myristoylated.

It is found in the virion membrane. Functionally, the large envelope protein exists in two topological conformations, one which is termed 'external' or Le-HBsAg and the other 'internal' or Li-HBsAg. In its external conformation the protein attaches the virus to cell receptors and thereby initiating infection. This interaction determines the species specificity and liver tropism. This attachment induces virion internalization predominantly through caveolin-mediated endocytosis. The large envelope protein also assures fusion between virion membrane and endosomal membrane. In its internal conformation the protein plays a role in virion morphogenesis and mediates the contact with the nucleocapsid like a matrix protein. Its function is as follows. The middle envelope protein plays an important role in the budding of the virion. It is involved in the induction of budding in a nucleocapsid independent way. In this process the majority of envelope proteins bud to form subviral lipoprotein particles of 22 nm of diameter that do not contain a nucleocapsid. The protein is Large envelope protein of Marmota monax (Woodchuck).